A 410-amino-acid chain; its full sequence is Cysteine desulfurase IscS (410 aa).

Pyridoxal 5'-phosphate contacts are provided by residues 80 to 81, Asn160, Gln188, and 208 to 210; these read AT and SGH. Lys211 is subject to N6-(pyridoxal phosphate)lysine. Thr248 provides a ligand contact to pyridoxal 5'-phosphate. Cys334 (cysteine persulfide intermediate) is an active-site residue. A [2Fe-2S] cluster-binding site is contributed by Cys334.

Belongs to the class-V pyridoxal-phosphate-dependent aminotransferase family. NifS/IscS subfamily. In terms of assembly, homodimer. Forms a heterotetramer with IscU, interacts with other sulfur acceptors. Requires pyridoxal 5'-phosphate as cofactor.

It is found in the cytoplasm. It carries out the reaction (sulfur carrier)-H + L-cysteine = (sulfur carrier)-SH + L-alanine. It participates in cofactor biosynthesis; iron-sulfur cluster biosynthesis. Master enzyme that delivers sulfur to a number of partners involved in Fe-S cluster assembly, tRNA modification or cofactor biosynthesis. Catalyzes the removal of elemental sulfur atoms from cysteine to produce alanine. Functions as a sulfur delivery protein for Fe-S cluster synthesis onto IscU, an Fe-S scaffold assembly protein, as well as other S acceptor proteins. In Rickettsia felis (strain ATCC VR-1525 / URRWXCal2) (Rickettsia azadi), this protein is Cysteine desulfurase IscS.